The following is a 441-amino-acid chain: G2/mitotic-specific cyclin-2 (441 aa).

It belongs to the cyclin family. Cyclin AB subfamily. In terms of assembly, interacts with the CDC2 and CDK2 protein kinases to form a serine/threonine kinase holoenzyme complex. The cyclin subunit imparts substrate specificity to the complex.

In terms of biological role, essential for the control of the cell cycle at the G2/M (mitosis) transition. G2/M cyclins accumulate steadily during G2 and are abruptly destroyed at mitosis. This Antirrhinum majus (Garden snapdragon) protein is G2/mitotic-specific cyclin-2.